Consider the following 185-residue polypeptide: Class I hydrophobin SC6 (185 aa).

The signal sequence occupies residues 1 to 17 (MVSRVLALISVAMLVGA). The disordered stretch occupies residues 70–104 (HIPEVTGSSTEEATSSSTWSGASSKPTDSAPTQCN). The segment covering 75–93 (TGSSTEEATSSSTWSGASS) has biased composition (low complexity). Residues 94-104 (KPTDSAPTQCN) show a composition bias toward polar residues. Intrachain disulfides connect Cys103/Cys164, Cys110/Cys158, Cys111/Cys144, and Cys165/Cys178.

This sequence belongs to the fungal hydrophobin family. In terms of assembly, self-assembles to form functional amyloid fibrils called rodlets. Self-assembly into fibrillar rodlets occurs spontaneously at hydrophobic:hydrophilic interfaces and the rodlets further associate laterally to form amphipathic monolayers.

It localises to the secreted. It is found in the cell wall. Functionally, aerial growth, conidiation, and dispersal of filamentous fungi in the environment rely upon a capability of their secreting small amphipathic proteins called hydrophobins (HPBs) with low sequence identity. Class I can self-assemble into an outermost layer of rodlet bundles on aerial cell surfaces, conferring cellular hydrophobicity that supports fungal growth, development and dispersal; whereas Class II form highly ordered films at water-air interfaces through intermolecular interactions but contribute nothing to the rodlet structure. SC6 is a dikaryon-specific class I hydrophobin that contributes to the formation of aerial hyphae and fruiting bodies. This chain is Class I hydrophobin SC6, found in Schizophyllum commune (Split gill fungus).